A 288-amino-acid chain; its full sequence is Homoserine kinase (288 aa).

79–89 (PPARGLGSSSA) lines the ATP pocket.

This sequence belongs to the GHMP kinase family. Homoserine kinase subfamily.

The protein resides in the cytoplasm. The catalysed reaction is L-homoserine + ATP = O-phospho-L-homoserine + ADP + H(+). It participates in amino-acid biosynthesis; L-threonine biosynthesis; L-threonine from L-aspartate: step 4/5. In terms of biological role, catalyzes the ATP-dependent phosphorylation of L-homoserine to L-homoserine phosphate. This chain is Homoserine kinase, found in Listeria welshimeri serovar 6b (strain ATCC 35897 / DSM 20650 / CCUG 15529 / CIP 8149 / NCTC 11857 / SLCC 5334 / V8).